The chain runs to 192 residues: Orotate phosphoribosyltransferase (192 aa).

5-phospho-alpha-D-ribose 1-diphosphate is bound by residues Arg101, Lys102, Lys105, His107, and 129–137 (EDVITTGGS). The orotate site is built by Thr133 and Arg161.

This sequence belongs to the purine/pyrimidine phosphoribosyltransferase family. PyrE subfamily. In terms of assembly, homodimer. Requires Mg(2+) as cofactor.

It catalyses the reaction orotidine 5'-phosphate + diphosphate = orotate + 5-phospho-alpha-D-ribose 1-diphosphate. The protein operates within pyrimidine metabolism; UMP biosynthesis via de novo pathway; UMP from orotate: step 1/2. Functionally, catalyzes the transfer of a ribosyl phosphate group from 5-phosphoribose 1-diphosphate to orotate, leading to the formation of orotidine monophosphate (OMP). The polypeptide is Orotate phosphoribosyltransferase (Sorangium cellulosum (strain So ce56) (Polyangium cellulosum (strain So ce56))).